Consider the following 461-residue polypeptide: Gram-negative bacteria-binding protein 2 (461 aa).

A signal peptide spans 1–20 (MRWEFLPCLLLLISNNKIFG). A CBM39 domain is found at 21-115 (FKVPSINFEM…TRVIINTRLL (95 aa)). N-linked (GlcNAc...) asparagine glycans are attached at residues N71, N170, N177, and N364. Positions 179 to 461 (TTWKHDIRQR…VIDYVRVYAE (283 aa)) constitute a GH16 domain.

This sequence belongs to the insect beta-1,3-glucan binding protein family.

The protein resides in the secreted. Its function is as follows. Involved in the recognition of invading microorganisms. Binds specifically to beta-1,3-glucan and activates the phenoloxidase cascade. This Drosophila melanogaster (Fruit fly) protein is Gram-negative bacteria-binding protein 2.